Consider the following 407-residue polypeptide: MSQPTAVRLFTSESVTEGHPDKICDAISDTILDALLTADPLSRVAVETVVTTGIVHVVGEVRTSGYVEIPQLVRRKLIEIGFTSSDVGFDGRTCGVSVSIGEQSQEIADGVDTSQEARGDGHFEEDDRAGAGDQGLMFGYATNETPEFMPLPIAVAHRLARRLTQVRKEGIVPHLRPDGKTQVTFAYDADDNPSHLDTVVISTQHDPEVDSAWLEVQLREHVIDWVIRDAGLEHLATGEITVLINPSGSFILGGPMGDAGLTGRKIIVDTYGGMARHGGGAFSGKDPSKVDRSAAYAMRWVAKNIVAAGLADRAEVQVAYAIGRAKPVGLYVETFDTAREGLTDEQIQAAVSQVFDLRPAAIIRELDLLRPIYAQTAAYGHFGRTDLDLPWEATNRTGRLREALGLK.

Histidine 19 is a binding site for ATP. Position 21 (aspartate 21) interacts with Mg(2+). Residue glutamate 47 participates in K(+) binding. Positions 60 and 103 each coordinate L-methionine. The flexible loop stretch occupies residues 103–113; the sequence is QSQEIADGVDT. The segment at 108 to 131 is disordered; it reads ADGVDTSQEARGDGHFEEDDRAGA. Residues 178–180, aspartate 258, 264–265, alanine 281, and lysine 285 contribute to the ATP site; these read DGK and RK. Aspartate 258 contacts L-methionine. Lysine 289 serves as a coordination point for L-methionine.

The protein belongs to the AdoMet synthase family. In terms of assembly, homotetramer; dimer of dimers. Mg(2+) serves as cofactor. The cofactor is K(+).

It is found in the cytoplasm. It carries out the reaction L-methionine + ATP + H2O = S-adenosyl-L-methionine + phosphate + diphosphate. The protein operates within amino-acid biosynthesis; S-adenosyl-L-methionine biosynthesis; S-adenosyl-L-methionine from L-methionine: step 1/1. Its function is as follows. Catalyzes the formation of S-adenosylmethionine (AdoMet) from methionine and ATP. The overall synthetic reaction is composed of two sequential steps, AdoMet formation and the subsequent tripolyphosphate hydrolysis which occurs prior to release of AdoMet from the enzyme. This Corynebacterium efficiens (strain DSM 44549 / YS-314 / AJ 12310 / JCM 11189 / NBRC 100395) protein is S-adenosylmethionine synthase.